A 485-amino-acid polypeptide reads, in one-letter code: MSFWNSLSITTRYSRLPRCFFTYVQPTPLDNSRWLIWNSELAKQFDLPENVHNHSELLDAFSGETVPSVFSPLAMKYAGHQFGCYNPDLGDGRGLLLAEIKDKKGNSFDLHLKGAGLTPYSRSGDGRAVLRSTIREYLCSEAMAGLGIPTTRALGMMTSDTPVFREGYETGALLIRMAETHIRFGHFEHLFYSNLLEELKLLSDKVIEWHFPCCLGEDKPYLAMFNNIVDRTAYMIAQWQAVGFAHGVMNTDNMSIIGQTFDYGPFGFLDDYEPGYICNHSDYQGRYAFNQQPRIGLWNLSALAHSLSPLIDKSDLEKALEQYEIKLHDYFSQLMRKKLGLLSKQEGDTRLFESMFELLSQNAVDYTRFMRALSYLDSQDKQTVVDLFVDREAATLWIDLYLTRCKLEVDSFDMRCSKMRKVNPKYVLRNYLAQQAIVKANEGDFSDVKILSTLLASPFDEHPDFERYAELPPEWGKRMEISCSS.

The ATP site is built by Gly-90, Gly-92, Arg-93, Lys-113, Asp-125, Gly-126, Arg-176, and Arg-183. The active-site Proton acceptor is Asp-252. The Mg(2+) site is built by Asn-253 and Asp-262. Asp-262 is an ATP binding site.

It belongs to the SELO family. Mg(2+) is required as a cofactor. It depends on Mn(2+) as a cofactor.

It catalyses the reaction L-seryl-[protein] + ATP = 3-O-(5'-adenylyl)-L-seryl-[protein] + diphosphate. The enzyme catalyses L-threonyl-[protein] + ATP = 3-O-(5'-adenylyl)-L-threonyl-[protein] + diphosphate. The catalysed reaction is L-tyrosyl-[protein] + ATP = O-(5'-adenylyl)-L-tyrosyl-[protein] + diphosphate. It carries out the reaction L-histidyl-[protein] + UTP = N(tele)-(5'-uridylyl)-L-histidyl-[protein] + diphosphate. It catalyses the reaction L-seryl-[protein] + UTP = O-(5'-uridylyl)-L-seryl-[protein] + diphosphate. The enzyme catalyses L-tyrosyl-[protein] + UTP = O-(5'-uridylyl)-L-tyrosyl-[protein] + diphosphate. Functionally, nucleotidyltransferase involved in the post-translational modification of proteins. It can catalyze the addition of adenosine monophosphate (AMP) or uridine monophosphate (UMP) to a protein, resulting in modifications known as AMPylation and UMPylation. The chain is Protein nucleotidyltransferase YdiU from Aliivibrio fischeri (strain ATCC 700601 / ES114) (Vibrio fischeri).